We begin with the raw amino-acid sequence, 466 residues long: Argininosuccinate lyase (466 aa).

It belongs to the lyase 1 family. Argininosuccinate lyase subfamily.

Its subcellular location is the cytoplasm. It catalyses the reaction 2-(N(omega)-L-arginino)succinate = fumarate + L-arginine. It functions in the pathway amino-acid biosynthesis; L-arginine biosynthesis; L-arginine from L-ornithine and carbamoyl phosphate: step 3/3. The sequence is that of Argininosuccinate lyase from Ehrlichia ruminantium (strain Gardel).